The sequence spans 348 residues: Probable dual-specificity RNA methyltransferase RlmN (348 aa).

The active-site Proton acceptor is the glutamate 93. The region spanning threonine 99–aspartate 333 is the Radical SAM core domain. Residues cysteine 106 and cysteine 338 are joined by a disulfide bond. [4Fe-4S] cluster contacts are provided by cysteine 113, cysteine 117, and cysteine 120. S-adenosyl-L-methionine is bound by residues glycine 160 to glutamate 161, serine 190, serine 219 to histidine 221, and asparagine 295. Cysteine 338 functions as the S-methylcysteine intermediate in the catalytic mechanism.

Belongs to the radical SAM superfamily. RlmN family. It depends on [4Fe-4S] cluster as a cofactor.

The protein resides in the cytoplasm. It catalyses the reaction adenosine(2503) in 23S rRNA + 2 reduced [2Fe-2S]-[ferredoxin] + 2 S-adenosyl-L-methionine = 2-methyladenosine(2503) in 23S rRNA + 5'-deoxyadenosine + L-methionine + 2 oxidized [2Fe-2S]-[ferredoxin] + S-adenosyl-L-homocysteine. The enzyme catalyses adenosine(37) in tRNA + 2 reduced [2Fe-2S]-[ferredoxin] + 2 S-adenosyl-L-methionine = 2-methyladenosine(37) in tRNA + 5'-deoxyadenosine + L-methionine + 2 oxidized [2Fe-2S]-[ferredoxin] + S-adenosyl-L-homocysteine. Specifically methylates position 2 of adenine 2503 in 23S rRNA and position 2 of adenine 37 in tRNAs. The chain is Probable dual-specificity RNA methyltransferase RlmN from Prochlorococcus marinus (strain AS9601).